We begin with the raw amino-acid sequence, 371 residues long: Maltose/maltodextrin import ATP-binding protein MalK (371 aa).

An ABC transporter domain is found at 4 to 234 (VQLQNVTKAW…PADRFVAGFI (231 aa)). 36–43 (GPSGCGKS) contributes to the ATP binding site.

Belongs to the ABC transporter superfamily. Maltooligosaccharide importer (TC 3.A.1.1.1) family. As to quaternary structure, the complex is composed of two ATP-binding proteins (MalK), two transmembrane proteins (MalG and MalK) and a solute-binding protein (MalE).

Its subcellular location is the cell inner membrane. It catalyses the reaction D-maltose(out) + ATP + H2O = D-maltose(in) + ADP + phosphate + H(+). Its function is as follows. Part of the ABC transporter complex MalEFGK involved in maltose/maltodextrin import. Responsible for energy coupling to the transport system. The polypeptide is Maltose/maltodextrin import ATP-binding protein MalK (Shigella flexneri serotype 5b (strain 8401)).